Reading from the N-terminus, the 455-residue chain is Argininosuccinate lyase (455 aa).

This sequence belongs to the lyase 1 family. Argininosuccinate lyase subfamily.

The protein localises to the cytoplasm. It catalyses the reaction 2-(N(omega)-L-arginino)succinate = fumarate + L-arginine. It functions in the pathway amino-acid biosynthesis; L-arginine biosynthesis; L-arginine from L-ornithine and carbamoyl phosphate: step 3/3. This Shewanella sp. (strain MR-7) protein is Argininosuccinate lyase.